Consider the following 574-residue polypeptide: Proline--tRNA ligase (574 aa).

Belongs to the class-II aminoacyl-tRNA synthetase family. ProS type 1 subfamily. Homodimer.

It is found in the cytoplasm. It catalyses the reaction tRNA(Pro) + L-proline + ATP = L-prolyl-tRNA(Pro) + AMP + diphosphate. In terms of biological role, catalyzes the attachment of proline to tRNA(Pro) in a two-step reaction: proline is first activated by ATP to form Pro-AMP and then transferred to the acceptor end of tRNA(Pro). As ProRS can inadvertently accommodate and process non-cognate amino acids such as alanine and cysteine, to avoid such errors it has two additional distinct editing activities against alanine. One activity is designated as 'pretransfer' editing and involves the tRNA(Pro)-independent hydrolysis of activated Ala-AMP. The other activity is designated 'posttransfer' editing and involves deacylation of mischarged Ala-tRNA(Pro). The misacylated Cys-tRNA(Pro) is not edited by ProRS. This is Proline--tRNA ligase from Ralstonia pickettii (strain 12J).